The following is a 243-amino-acid chain: Voltage-gated monoatomic cation channel TMEM109 (243 aa).

Positions 1–33 are cleaved as a signal peptide; it reads MAGSGSSAPWGKHLLHAVLMVLVALVLLHSALA. Over 34–83 the chain is Lumenal; it reads QSHRDFAPPGQQRREAPVDLLTQIGRSVRETLDTWIGPETMHLISETLSQ. The chain crosses the membrane as a helical span at residues 84-104; sequence VMWAISSAISVAFFALSGIAA. Over 105 to 135 the chain is Cytoplasmic; the sequence is QLLTALGLDGDHLTQGLKLSPSQVQTFLLWG. The helical transmembrane segment at 136–156 threads the bilayer; it reads AGALVVYWLLSLLLGLVLAVL. At 157–185 the chain is on the lumenal side; sequence GRILGGLKLVIFLAGFVALVRSVPDPSTR. The helical transmembrane segment at 186–205 threads the bilayer; sequence ALLLLALLTLYALLSRLTGS. Over 206 to 243 the chain is Cytoplasmic; the sequence is RASGAQLEAKVRGLERQVDELRWRQRRAAKGARSVEEE.

In terms of assembly, homooligomer. Interacts with CRYAB; in the cellular response to DNA damage. The N-terminus is blocked. In terms of tissue distribution, widely expressed. Expressed in skeletal, cardiac and smooth muscle cells, in brain, including neuroglial cells, cerebral cortex neurons and cerebellum, but not Purkinje cells. Also detected in Paneth and Goblet cells of the small intestine (but not in the epithelium), duodenal gland, pancreas, parotid gland, testis, thyroid gland and adrenal gland, as well as in epidermis, choroid plexus, ductus epididymidis, lymphocytes, fibroblasts, endothelial cells and seminiferous epithelial cells (at protein level). Not detected in mucous cells of the duodenal gland, in hepatocytes nor in uriniferous tubules.

It is found in the nucleus outer membrane. The protein resides in the endoplasmic reticulum membrane. The protein localises to the sarcoplasmic reticulum membrane. It catalyses the reaction K(+)(in) = K(+)(out). The enzyme catalyses Ca(2+)(in) = Ca(2+)(out). Functionally, functions as a voltage-gated monoatomic cation channel permeable to both potassium and calcium. Plays a role in the cellular response to DNA damage. The sequence is that of Voltage-gated monoatomic cation channel TMEM109 from Oryctolagus cuniculus (Rabbit).